The primary structure comprises 491 residues: F-box/LRR-repeat protein 7 (491 aa).

Residues 1–79 are disordered; that stretch reads MGANNGKQYG…GRGSSTSSSS (79 aa). Residues 10–26 are compositionally biased toward low complexity; it reads GSEGKGSSSISSDVSSS. Polar residues predominate over residues 27–55; sequence TDHTPTKAQKNVATSEDSDLSMRTLSTPS. Residues 111 to 157 enclose the F-box domain; the sequence is QASIDRLPDHSMVQIFSFLPTNQLCRCARVCRRWYNLAWDPRLWRTI. LRR repeat units lie at residues 170-195, 196-221, 222-247, 253-281, 282-307, 308-333, 334-359, 360-385, 386-411, 412-437, and 438-463; these read LKVLTRRLCQDTPNVCLMLETVTVSG, CRRLTDRGLYTIAQCCPELRRLEVSG, CYNISNEAVFDVVSLCPNLEHLDVSG, CISLTREASIKLSPLHGKQISIRYLDMTD, CFVLEDEGLHTIAAHCTQLTHLYLRR, CVRLTDEGLRYLVIYCASIKELSVSD, CRFVSDFGLREIAKLESRLRYLSIAH, CGRVTDVGIRYVAKYCSKLRYLNARG, CEGITDHGVEYLAKNCTKLKSLDIGK, CPLVSDTGLECLALNCFNLKRLSLKS, and CESITGQGLQIVAANCFDLQTLNVQD.

This sequence belongs to the FBXL7 family. Part of the SCF (SKP1-CUL1-F-box) E3 ubiquitin-protein ligase complex SCF(FBXL7) composed of CUL1, SKP1, RBX1 and FBXL7. Interacts with AURKA; interaction takes place during mitosis but not in interphase. Interacts with BIRC5; this interaction allows BIRC5 to be polyubiquitinated by the SCF(FBXL7) E3 ubiquitin-protein ligase complex.

Its subcellular location is the cytoplasm. It is found in the cytoskeleton. It localises to the microtubule organizing center. The protein resides in the centrosome. Its pathway is protein modification; protein ubiquitination. In terms of biological role, substrate recognition component of a SCF (SKP1-CUL1-F-box protein) E3 ubiquitin-protein ligase complex. During mitosis, it mediates the ubiquitination and subsequent proteasomal degradation of AURKA, causing mitotic arrest. It also regulates mitochondrial function by mediating the ubiquitination and proteasomal degradation of the apoptosis inhibitor BIRC5. This chain is F-box/LRR-repeat protein 7 (FBXL7), found in Homo sapiens (Human).